The chain runs to 202 residues: Ribosome biogenesis regulatory protein homolog (202 aa).

The disordered stretch occupies residues 82 to 103 (TLPPPTTPLPREKPVPQPKPET).

Belongs to the RRS1 family. Component of a hexameric 5S RNP precursor complex, composed of 5S RNA, RRS1, RPF2, RPL5, RPL11 and SYO1; this complex acts as a precursor for ribosome assembly.

The protein resides in the nucleus. Its function is as follows. Involved in ribosomal large subunit assembly. In Chaetomium thermophilum (strain DSM 1495 / CBS 144.50 / IMI 039719) (Thermochaetoides thermophila), this protein is Ribosome biogenesis regulatory protein homolog.